The sequence spans 251 residues: Diphthine synthase (251 aa).

S-adenosyl-L-methionine-binding positions include leucine 9, aspartate 85, valine 88, 113–114 (SI), leucine 165, alanine 202, and histidine 227.

Belongs to the diphthine synthase family. As to quaternary structure, homodimer.

It catalyses the reaction 2-[(3S)-amino-3-carboxypropyl]-L-histidyl-[translation elongation factor 2] + 3 S-adenosyl-L-methionine = diphthine-[translation elongation factor 2] + 3 S-adenosyl-L-homocysteine + 3 H(+). It functions in the pathway protein modification; peptidyl-diphthamide biosynthesis. Its function is as follows. S-adenosyl-L-methionine-dependent methyltransferase that catalyzes the trimethylation of the amino group of the modified target histidine residue in translation elongation factor 2 (EF-2), to form an intermediate called diphthine. The three successive methylation reactions represent the second step of diphthamide biosynthesis. The polypeptide is Diphthine synthase (Methanosphaerula palustris (strain ATCC BAA-1556 / DSM 19958 / E1-9c)).